The chain runs to 173 residues: Nicotinamide-nucleotide adenylyltransferase (173 aa).

This sequence belongs to the archaeal NMN adenylyltransferase family.

It localises to the cytoplasm. It catalyses the reaction beta-nicotinamide D-ribonucleotide + ATP + H(+) = diphosphate + NAD(+). It participates in cofactor biosynthesis; NAD(+) biosynthesis; NAD(+) from nicotinamide D-ribonucleotide: step 1/1. This Methanosarcina mazei (strain ATCC BAA-159 / DSM 3647 / Goe1 / Go1 / JCM 11833 / OCM 88) (Methanosarcina frisia) protein is Nicotinamide-nucleotide adenylyltransferase.